A 66-amino-acid chain; its full sequence is Large ribosomal subunit protein bL35 (66 aa).

Belongs to the bacterial ribosomal protein bL35 family.

The chain is Large ribosomal subunit protein bL35 from Rhodopseudomonas palustris (strain BisB18).